The following is a 71-amino-acid chain: Small ribosomal subunit protein bS21 (71 aa).

Residues 50–59 (AAAVKRHAKK) show a composition bias toward basic residues. Positions 50–71 (AAAVKRHAKKVQREQRRAVRLY) are disordered. A compositionally biased stretch (basic and acidic residues) spans 60–71 (VQREQRRAVRLY).

It belongs to the bacterial ribosomal protein bS21 family.

This Pseudomonas fluorescens (strain ATCC BAA-477 / NRRL B-23932 / Pf-5) protein is Small ribosomal subunit protein bS21.